The chain runs to 146 residues: 3-hydroxyacyl-[acyl-carrier-protein] dehydratase FabZ (146 aa).

Residue histidine 49 is part of the active site.

The protein belongs to the thioester dehydratase family. FabZ subfamily.

Its subcellular location is the cytoplasm. It carries out the reaction a (3R)-hydroxyacyl-[ACP] = a (2E)-enoyl-[ACP] + H2O. Involved in unsaturated fatty acids biosynthesis. Catalyzes the dehydration of short chain beta-hydroxyacyl-ACPs and long chain saturated and unsaturated beta-hydroxyacyl-ACPs. The chain is 3-hydroxyacyl-[acyl-carrier-protein] dehydratase FabZ from Pseudomonas entomophila (strain L48).